We begin with the raw amino-acid sequence, 211 residues long: GATA transcription factor 19 (211 aa).

A GATA-type zinc finger spans residues Cys77–Cys102. The interval Arg111–Pro131 is disordered.

Belongs to the type IV zinc-finger family. Class B subfamily. In terms of assembly, forms heterodimers with GATA18.

The protein resides in the nucleus. In terms of biological role, transcriptional regulator that specifically binds 5'-GATA-3' or 5'-GAT-3' motifs within gene promoters. Regulates both flower and shoot apical meristem (SAM) development, especially for establishing organ boundaries in shoots and flowers, probably by controlling the number and position of WUS-expressing cells. The sequence is that of GATA transcription factor 19 from Arabidopsis thaliana (Mouse-ear cress).